We begin with the raw amino-acid sequence, 339 residues long: DNA-directed RNA polymerase subunit alpha (339 aa).

The alpha N-terminal domain (alpha-NTD) stretch occupies residues 1-234 (MIEKNWQELI…DQFQIFINFE (234 aa)). Residues 251-339 (FNPALLRKVD…DLAKRFEDHV (89 aa)) form an alpha C-terminal domain (alpha-CTD) region.

It belongs to the RNA polymerase alpha chain family. Homodimer. The RNAP catalytic core consists of 2 alpha, 1 beta, 1 beta' and 1 omega subunit. When a sigma factor is associated with the core the holoenzyme is formed, which can initiate transcription.

It catalyses the reaction RNA(n) + a ribonucleoside 5'-triphosphate = RNA(n+1) + diphosphate. DNA-dependent RNA polymerase catalyzes the transcription of DNA into RNA using the four ribonucleoside triphosphates as substrates. The polypeptide is DNA-directed RNA polymerase subunit alpha (Maricaulis maris (strain MCS10) (Caulobacter maris)).